The following is a 343-amino-acid chain: tRNA N6-adenosine threonylcarbamoyltransferase (343 aa).

Residues His-108 and His-112 each coordinate Fe cation. Substrate contacts are provided by residues 129 to 133 (LISGG), Asp-161, Glu-178, and Ser-258. Asp-286 is a binding site for Fe cation.

The protein belongs to the KAE1 / TsaD family. Fe(2+) is required as a cofactor.

Its subcellular location is the cytoplasm. It carries out the reaction L-threonylcarbamoyladenylate + adenosine(37) in tRNA = N(6)-L-threonylcarbamoyladenosine(37) in tRNA + AMP + H(+). Required for the formation of a threonylcarbamoyl group on adenosine at position 37 (t(6)A37) in tRNAs that read codons beginning with adenine. Is probably involved in the transfer of the threonylcarbamoyl moiety of threonylcarbamoyl-AMP (TC-AMP) to the N6 group of A37. This is tRNA N6-adenosine threonylcarbamoyltransferase from Pyrobaculum aerophilum (strain ATCC 51768 / DSM 7523 / JCM 9630 / CIP 104966 / NBRC 100827 / IM2).